The primary structure comprises 496 residues: Guanosine-5'-triphosphate,3'-diphosphate pyrophosphatase (496 aa).

It belongs to the GppA/Ppx family. GppA subfamily.

It carries out the reaction guanosine 3'-diphosphate 5'-triphosphate + H2O = guanosine 3',5'-bis(diphosphate) + phosphate + H(+). The protein operates within purine metabolism; ppGpp biosynthesis; ppGpp from GTP: step 2/2. Catalyzes the conversion of pppGpp to ppGpp. Guanosine pentaphosphate (pppGpp) is a cytoplasmic signaling molecule which together with ppGpp controls the 'stringent response', an adaptive process that allows bacteria to respond to amino acid starvation, resulting in the coordinated regulation of numerous cellular activities. This chain is Guanosine-5'-triphosphate,3'-diphosphate pyrophosphatase, found in Aeromonas salmonicida (strain A449).